Reading from the N-terminus, the 110-residue chain is U-scoloptoxin(16)-Er6a (110 aa).

A signal peptide spans M1 to G26.

It belongs to the scoloptoxin-16 family. Contains 4 disulfide bonds. As to expression, expressed by the venom gland.

It localises to the secreted. This Ethmostigmus rubripes (Giant centipede) protein is U-scoloptoxin(16)-Er6a.